We begin with the raw amino-acid sequence, 332 residues long: RNA polymerase principal sigma factor HrdD (332 aa).

The interval 1-21 (MATRAVARRQPAASGETGAAG) is disordered. The short motif at 124-137 (DLIQEGNAGLVRAV) is the Polymerase core binding element. A DNA-binding region (H-T-H motif) is located at residues 294 to 313 (LTEVGKQHGLTRERIRQIEK).

This sequence belongs to the sigma-70 factor family.

Functionally, sigma factors are initiation factors that promote the attachment of RNA polymerase to specific initiation sites and are then released. This Streptomyces griseus protein is RNA polymerase principal sigma factor HrdD (hrdD).